The sequence spans 110 residues: MSQYASRSDSKGALDSSSPEAYTEDDKTEEDIPAPSNYLWLTIISCFCPAYPVNIVALVFSIMSLNSYNDGDYEGARRLGRNAKWVAIASIIIGLVIIGVSCAVHFSRNP.

Positions 1–32 are disordered; sequence MSQYASRSDSKGALDSSSPEAYTEDDKTEEDI. The Cytoplasmic segment spans residues 1 to 42; that stretch reads MSQYASRSDSKGALDSSSPEAYTEDDKTEEDIPAPSNYLWLT. Over residues 22-32 the composition is skewed to acidic residues; sequence YTEDDKTEEDI. The helical intramembrane region spans 43 to 63; the sequence is IISCFCPAYPVNIVALVFSIM. The Cytoplasmic segment spans residues 64–85; sequence SLNSYNDGDYEGARRLGRNAKW. The chain crosses the membrane as a helical span at residues 86-106; the sequence is VAIASIIIGLVIIGVSCAVHF. Residues 107–110 are Extracellular-facing; that stretch reads SRNP.

It belongs to the CD225/Dispanin family. Interacts with the giant stinging tree toxin ExTxA (P0DQP3). Interacts with Nav1.7/SCN9A. Interacts with Nav1.1/SCN1A, Nav1.2/SCN2A, Nav1.3/SCN3A, Nav1.4/SCN4A, Nav1.5/SCN5A, and Nav1.6/SCN8A. In terms of tissue distribution, probably expressed in nociceptive neurons. Detected in dorsal root ganglion neurons.

It is found in the membrane. Functionally, probable accessory protein of voltage-gated sodium channels. The protein is Transmembrane protein 233 of Mus musculus (Mouse).